Consider the following 424-residue polypeptide: Serine--tRNA ligase (424 aa).

231–233 provides a ligand contact to L-serine; it reads TAE. 262–264 is an ATP binding site; the sequence is RSE. E285 lines the L-serine pocket. 349-352 contacts ATP; sequence EISS. S385 contacts L-serine.

This sequence belongs to the class-II aminoacyl-tRNA synthetase family. Type-1 seryl-tRNA synthetase subfamily. Homodimer. The tRNA molecule binds across the dimer.

It is found in the cytoplasm. It catalyses the reaction tRNA(Ser) + L-serine + ATP = L-seryl-tRNA(Ser) + AMP + diphosphate + H(+). It carries out the reaction tRNA(Sec) + L-serine + ATP = L-seryl-tRNA(Sec) + AMP + diphosphate + H(+). It participates in aminoacyl-tRNA biosynthesis; selenocysteinyl-tRNA(Sec) biosynthesis; L-seryl-tRNA(Sec) from L-serine and tRNA(Sec): step 1/1. Its function is as follows. Catalyzes the attachment of serine to tRNA(Ser). Is also able to aminoacylate tRNA(Sec) with serine, to form the misacylated tRNA L-seryl-tRNA(Sec), which will be further converted into selenocysteinyl-tRNA(Sec). The polypeptide is Serine--tRNA ligase (Bacillus pumilus (strain SAFR-032)).